A 90-amino-acid chain; its full sequence is Small ribosomal subunit protein uS15c (90 aa).

Belongs to the universal ribosomal protein uS15 family. Part of the 30S ribosomal subunit.

Its subcellular location is the plastid. The protein resides in the chloroplast. In Buxus microphylla (Littleleaf boxwood), this protein is Small ribosomal subunit protein uS15c (rps15).